We begin with the raw amino-acid sequence, 351 residues long: Phosphoribosylformylglycinamidine cyclo-ligase (351 aa).

Belongs to the AIR synthase family.

The protein localises to the cytoplasm. It carries out the reaction 2-formamido-N(1)-(5-O-phospho-beta-D-ribosyl)acetamidine + ATP = 5-amino-1-(5-phospho-beta-D-ribosyl)imidazole + ADP + phosphate + H(+). It participates in purine metabolism; IMP biosynthesis via de novo pathway; 5-amino-1-(5-phospho-D-ribosyl)imidazole from N(2)-formyl-N(1)-(5-phospho-D-ribosyl)glycinamide: step 2/2. The polypeptide is Phosphoribosylformylglycinamidine cyclo-ligase (Xylella fastidiosa (strain Temecula1 / ATCC 700964)).